The primary structure comprises 266 residues: Undecaprenyl-diphosphatase (266 aa).

Helical transmembrane passes span 1-21 (MDTF…FLPI), 39-59 (QGLA…VLYF), 83-103 (SKLA…GFAL), 111-131 (LRGP…LWWA), 144-164 (TGWK…IPGT), 183-203 (AAAR…AILM), 218-238 (SLAL…HLFL), and 246-266 (MTPF…FIFM).

The protein belongs to the UppP family.

Its subcellular location is the cell inner membrane. It carries out the reaction di-trans,octa-cis-undecaprenyl diphosphate + H2O = di-trans,octa-cis-undecaprenyl phosphate + phosphate + H(+). In terms of biological role, catalyzes the dephosphorylation of undecaprenyl diphosphate (UPP). Confers resistance to bacitracin. The polypeptide is Undecaprenyl-diphosphatase (Shewanella woodyi (strain ATCC 51908 / MS32)).